The sequence spans 708 residues: MKLLFLALLSLLALGPSLAARRRGVRWCTISKPEAAKCSKLQQNLKRVRGPSLSCISRKSYLECIQAIAAKRADAMSLDAGLVYEAGQDPYRLRPVAAEVYGTEGAPRTHYYAVALVKKDSNLQLNQLQGVRSCHTGLNRSAGWKIPVGTLRPYLGWAGPPAPLQEAVANFFSASCVPCADGNQYPNLCRLCAGTGADKCACSSKEPYFGYSGAFKCLKDGAGDVAFVKDSTVFENLPNKAERDQYELLCPDNTRKPVDEFEQCHLARVPSHAVVARSVGGKEDSIWRLLSKAQEKFGKGTSGSFQLFSSPPGQKDLLFKDGAQGFLRIPSRVDAELYLGPSYLTVIKNLKESAAEVEARGARVVWCAVGPEELRKCQQWSGQSNGTVTCTTAADTEDCIALVLKGEADAMSLDGGVIYIAGKCGLAPVLAESQRSEGGSNLDCVNRPLEGDRAVAVVRKSSAGLTWNSRRGTKSCHTAVGRTAGWNIPMGLLFNQTRSCNFDEFFSQSCAPGADPNSNLCALCVGNEQGQDKCAPNSNERYFSYAGSFRCLVENAGDVAFVKASTVLENPDGRGTEAWAKDLKLEDFELLCLDGTRKPVSEFETCHLARAPSHGVVSRKDRVQYLEQVLLDQQGKFGRNGPLCPGKFCLFQSETKNLLFNDNTECLAKLQGKTTYEKYLGPEYVTAVANLRQCSTSPLLEACTFLRN.

An N-terminal signal peptide occupies residues M1–A19. Transferrin-like domains are found at residues V25–E352 and V364–Q693. Intrachain disulfides connect C28–C64 and C38–C55. Residue D79 participates in Fe(3+) binding. Residue R92 is part of the active site. Y111 serves as a coordination point for Fe(3+). 5 disulfide bridges follow: C134/C217, C176/C192, C179/C202, C189/C200, and C250/C264. T136 provides a ligand contact to hydrogencarbonate. N139 is a glycosylation site (N-linked (GlcNAc...) asparagine). Hydrogencarbonate is bound by residues R140, A142, and G143. Residue Y211 participates in Fe(3+) binding. Residue H272 coordinates Fe(3+). S278 acts as the Nucleophile in catalysis. 2 disulfide bridges follow: C367/C399 and C377/C390. N-linked (GlcNAc...) asparagine glycosylation is present at N385. Fe(3+)-binding residues include D414 and D452. Cystine bridges form between C476-C551, C510-C524, C521-C534, and C592-C606. Residues T478, R482, A484, and G485 each coordinate hydrogencarbonate. A glycan (N-linked (GlcNAc...) asparagine) is linked at N495. Position 545 (Y545) interacts with Fe(3+). H614 provides a ligand contact to Fe(3+).

Belongs to the transferrin family. In terms of assembly, monomer. Found in a complex with LTF, CLU, EPPIN and SEMG1. Interacts with prey activated coagulation factor X; the interaction inhibits coagulation factor X catalytic activity. Found in a complex with MPO and LTF; interacts directly with CP, allows Fe(3+) incorporation into LTF and activation of CP ferroxidase activity. In terms of processing, N-glycosylated. Glycosylation is important for draculin anticoagulant activity. Probably also O-glycosylated. In terms of tissue distribution, expressed in the submaxillary gland and secreted in the saliva (at protein level).

Its subcellular location is the secreted. Its function is as follows. Transferrins are iron binding transport proteins which can bind two Fe(3+) ions in association with the binding of an anion, usually bicarbonate. In terms of biological role, major iron-binding and multifunctional protein found in exocrine fluids such as breast milk and mucosal secretions. Has antimicrobial activity. Antimicrobial properties may include bacteriostasis, which is related to its ability to sequester free iron and thus inhibit microbial growth, as well as direct bactericidal properties leading to the release of lipopolysaccharides from the bacterial outer membrane. May have anabolic, differentiating and anti-apoptotic effects on osteoblasts and may also inhibit osteoclastogenesis, possibly playing a role in the regulation of bone growth. May interfere with the lipopolysaccharide (LPS)-stimulated TLR4 signaling. Functionally, the lactotransferrin transferrin-like domain 1 functions as a serine protease of the peptidase S60 family that cuts arginine rich regions. This function contributes to the antimicrobial activity. Shows a preferential cleavage at -Arg-Ser-Arg-Arg-|- and -Arg-Arg-Ser-Arg-|-, and of Z-Phe-Arg-|-aminomethylcoumarin sites. Acts as an anticoagulant of the blood coagulation cascade of the bat's prey by inhibiting coagulation factor IX and activated coagulation factor X. The protein is Lactotransferrin of Desmodus rotundus (Vampire bat).